The primary structure comprises 285 residues: Bifunctional protein FolD (285 aa).

NADP(+) contacts are provided by residues 165-167 (GRS) and Ser-190.

The protein belongs to the tetrahydrofolate dehydrogenase/cyclohydrolase family. Homodimer.

The catalysed reaction is (6R)-5,10-methylene-5,6,7,8-tetrahydrofolate + NADP(+) = (6R)-5,10-methenyltetrahydrofolate + NADPH. The enzyme catalyses (6R)-5,10-methenyltetrahydrofolate + H2O = (6R)-10-formyltetrahydrofolate + H(+). Its pathway is one-carbon metabolism; tetrahydrofolate interconversion. Its function is as follows. Catalyzes the oxidation of 5,10-methylenetetrahydrofolate to 5,10-methenyltetrahydrofolate and then the hydrolysis of 5,10-methenyltetrahydrofolate to 10-formyltetrahydrofolate. This chain is Bifunctional protein FolD, found in Burkholderia mallei (strain NCTC 10247).